We begin with the raw amino-acid sequence, 136 residues long: MSYAIIETGGKQLKVQPGRFYDIELLHVDPETSHTIDKVLLVSHDNEVTVGQPFVEGATVEGTILRHFRGRKVIVYKMRPKKKTRKKRGHRQEITRFMVNAINFNGQVIGATENGTTTPTTANVEVATTEGSDSEE.

Belongs to the bacterial ribosomal protein bL21 family. In terms of assembly, part of the 50S ribosomal subunit. Contacts protein L20.

Functionally, this protein binds to 23S rRNA in the presence of protein L20. This is Large ribosomal subunit protein bL21 from Gloeothece citriformis (strain PCC 7424) (Cyanothece sp. (strain PCC 7424)).